We begin with the raw amino-acid sequence, 299 residues long: DNA-binding transcriptional repressor CapW (299 aa).

Residues 1–22 are disordered; the sequence is MTDESKPTDDQPTSKGRQGARW. The segment at 1-95 is winged HTH domain; that stretch reads MTDESKPTDD…SFKAVFPSSA (95 aa). Positions 96–207 are WYL domain; it reads VERYLDDLLR…LTRIKCCKYV (112 aa). Positions 131 to 211 constitute a WYL domain; the sequence is GRRLNADIVG…KCCKYVGQDR (81 aa). The probable ligand-binding region stretch occupies residues 156-200; that stretch reads YQSLTDPEGGERMLSPHALVHDGNRWHVRAYCHKRKAFRDFSLTR. Residues 208–299 form a WCX domain region; the sequence is GQDRDRADED…RDEIKDLIQY (92 aa).

As to quaternary structure, homodimer.

Functionally, transcriptional regulator of a CBASS antivirus system. CBASS (cyclic oligonucleotide-based antiphage signaling system) provides immunity against bacteriophage. The CD-NTase protein synthesizes cyclic nucleotides in response to infection; these serve as specific second messenger signals. The signals activate a diverse range of effectors, leading to bacterial cell death and thus abortive phage infection. A type III CBASS system, part of a Cap17-CapW-CdnC-Cap7-Cap6-Cap18 locus. Binds specifically to palindromes that overlap the -10 site in the promoter of cdnC, found between the genes for divergently transcribed capW and cdnC (cognate DNA). Probably represses transcription bidirectionally from the promoter. The sequence is that of DNA-binding transcriptional repressor CapW from Pseudomonas aeruginosa.